Reading from the N-terminus, the 312-residue chain is Zinc transporter ZitB (312 aa).

The next 5 helical transmembrane spans lie at 21–41 (LLFAFIVTAGFMLLEVVGGIL), 48–68 (LADAGHMLTDAAALLFALLVV), 90–110 (AAFVNAIALVVITLLIVWEAI), 123–143 (LMMVIAVAGLLANLFAFWILH), and 164–184 (LLGSVGAIVAALIIIWTGWTP).

The protein belongs to the cation diffusion facilitator (CDF) transporter (TC 2.A.4) family. SLC30A subfamily.

The protein resides in the cell inner membrane. In terms of biological role, involved in zinc efflux across the cytoplasmic membrane, thus reducing zinc accumulation in the cytoplasm and rendering bacteria more resistant to zinc. It may contribute to zinc homeostasis at low concentrations of zinc. In Salmonella typhi, this protein is Zinc transporter ZitB.